Reading from the N-terminus, the 312-residue chain is 1-(5-phosphoribosyl)-5-[(5-phosphoribosylamino)methylideneamino] imidazole-4-carboxamide isomerase HISN3, chloroplastic (312 aa).

A chloroplast-targeting transit peptide spans 1–67; the sequence is MRSPASTPSI…IHKGKVKQIV (67 aa). 1-(5-phospho-beta-D-ribosyl)-5-[(5-phospho-beta-D-ribosylamino)methylideneamino]imidazole-4-carboxamide is bound at residue Asp-57. Gln-65 serves as a coordination point for 5-[(5-phospho-1-deoxy-D-ribulos-1-ylimino)methylamino]-1-(5-phospho-beta-D-ribosyl)imidazole-4-carboxamide. Residues Gln-65 and Ile-66 each contribute to the Na(+) site. Gly-68 lines the 1-(5-phospho-beta-D-ribosyl)-5-[(5-phospho-beta-D-ribosylamino)methylideneamino]imidazole-4-carboxamide pocket. Residues His-108, Gly-138, Thr-158, and Ser-159 each contribute to the 5-[(5-phospho-1-deoxy-D-ribulos-1-ylimino)methylamino]-1-(5-phospho-beta-D-ribosyl)imidazole-4-carboxamide site. 1-(5-phospho-beta-D-ribosyl)-5-[(5-phospho-beta-D-ribosylamino)methylideneamino]imidazole-4-carboxamide-binding residues include Gly-138, Thr-158, and Ser-159. Residues Ser-159 and Phe-162 each coordinate Na(+). 4 residues coordinate 1-(5-phospho-beta-D-ribosyl)-5-[(5-phospho-beta-D-ribosylamino)methylideneamino]imidazole-4-carboxamide: Asp-187, Arg-203, Trp-204, and His-230. Asp-187 contacts 5-[(5-phospho-1-deoxy-D-ribulos-1-ylimino)methylamino]-1-(5-phospho-beta-D-ribosyl)imidazole-4-carboxamide. A 5-[(5-phospho-1-deoxy-D-ribulos-1-ylimino)methylamino]-1-(5-phospho-beta-D-ribosyl)imidazole-4-carboxamide-binding site is contributed by Trp-204. Glu-235 is a binding site for Na(+). Residues Gly-236, Gly-262, Gly-285, and Ser-286 each coordinate 1-(5-phospho-beta-D-ribosyl)-5-[(5-phospho-beta-D-ribosylamino)methylideneamino]imidazole-4-carboxamide. Positions 236, 262, 285, and 286 each coordinate 5-[(5-phospho-1-deoxy-D-ribulos-1-ylimino)methylamino]-1-(5-phospho-beta-D-ribosyl)imidazole-4-carboxamide.

Belongs to the HisA/HisF family. Requires Na(+) as cofactor.

It is found in the plastid. The protein localises to the chloroplast. The enzyme catalyses 1-(5-phospho-beta-D-ribosyl)-5-[(5-phospho-beta-D-ribosylamino)methylideneamino]imidazole-4-carboxamide = 5-[(5-phospho-1-deoxy-D-ribulos-1-ylimino)methylamino]-1-(5-phospho-beta-D-ribosyl)imidazole-4-carboxamide. It functions in the pathway amino-acid biosynthesis; L-histidine biosynthesis; L-histidine from 5-phospho-alpha-D-ribose 1-diphosphate: step 4/9. Its function is as follows. Component of the histidine biosynthesis pathway that catalyzes the isomerization of 5'-ProFAR (pro-phosphoribosyl formimino-5-aminoimidazole-4-carboxamide ribonucleotide, referred as 1-(5-phospho-beta-D-ribosyl)-5-[(5-phospho-beta-D-ribosylamino)methylideneamino]imidazole-4-carboxamide) to PrFAR (phosphoribulosyl formimino-5-aminoimidazole-4-carboxamide ribonucleotide, referred as 5-[(5-phospho-1-deoxy-D-ribulos-1-ylimino)methylamino]-1-(5-phospho-beta-D-ribosyl)imidazole-4-carboxamide). This Medicago truncatula (Barrel medic) protein is 1-(5-phosphoribosyl)-5-[(5-phosphoribosylamino)methylideneamino] imidazole-4-carboxamide isomerase HISN3, chloroplastic.